Here is a 449-residue protein sequence, read N- to C-terminus: Probable rhamnogalacturonase E (449 aa).

The signal sequence occupies residues 1-21 (MRSKTFSVLSSCLLLIATVQG). Cys42 and Cys68 are joined by a disulfide. N-linked (GlcNAc...) asparagine glycans are attached at residues Asn53, Asn91, and Asn106. Asp221 (proton donor) is an active-site residue. Residues Cys223 and Cys240 are joined by a disulfide bond. Asn241 and Asn256 each carry an N-linked (GlcNAc...) asparagine glycan. His296 is a catalytic residue. Asn323 carries an N-linked (GlcNAc...) asparagine glycan. Intrachain disulfides connect Cys346/Cys352 and Cys374/Cys383.

The protein belongs to the glycosyl hydrolase 28 family.

The protein resides in the secreted. The enzyme catalyses Endohydrolysis of alpha-D-GalA-(1-&gt;2)-alpha-L-Rha glycosidic bond in the rhamnogalacturonan I backbone with initial inversion of anomeric configuration releasing oligosaccharides with beta-D-GalA at the reducing end.. In terms of biological role, pectinolytic enzymes consist of four classes of enzymes: pectine lyase, polygalacturonase, pectin methylesterase and rhamnogalacturonase. Hydrolyzes alpha-D-galacturonopyranosyl-(1,2)-alpha-L-rhamnopyranosyl linkages in the backbone of the hairy regions of pectins. This is Probable rhamnogalacturonase E (rhgE) from Aspergillus flavus (strain ATCC 200026 / FGSC A1120 / IAM 13836 / NRRL 3357 / JCM 12722 / SRRC 167).